The chain runs to 185 residues: MSHLQAHMQRNNKESHSLSPFSQDSQHVTLPVECLEHGQGLELPHYATSGSAGLDLRAALAEEETVVLAPGQRALIPTGLVFHLLPGFEAQIRPRSGLALKHGITCLNTPGTIDSDYRGEIKILLINLGQENFSIQRGMRIAQTVIAPVVQVNVCAIEPDQKDSSQTPSNEGSRGADGFGSTGHD.

Residues 1–23 (MSHLQAHMQRNNKESHSLSPFSQ) are disordered. Substrate is bound by residues 95–97 (RSG), N108, 112–114 (TID), and K122. The interval 160–185 (DQKDSSQTPSNEGSRGADGFGSTGHD) is disordered. Over residues 175 to 185 (GADGFGSTGHD) the composition is skewed to gly residues.

The protein belongs to the dUTPase family. It depends on Mg(2+) as a cofactor.

The catalysed reaction is dUTP + H2O = dUMP + diphosphate + H(+). It participates in pyrimidine metabolism; dUMP biosynthesis; dUMP from dCTP (dUTP route): step 2/2. Functionally, this enzyme is involved in nucleotide metabolism: it produces dUMP, the immediate precursor of thymidine nucleotides and it decreases the intracellular concentration of dUTP so that uracil cannot be incorporated into DNA. The chain is Deoxyuridine 5'-triphosphate nucleotidohydrolase from Bartonella quintana (strain Toulouse) (Rochalimaea quintana).